Reading from the N-terminus, the 424-residue chain is Glutamate-1-semialdehyde 2,1-aminomutase (424 aa).

K258 carries the N6-(pyridoxal phosphate)lysine modification.

It belongs to the class-III pyridoxal-phosphate-dependent aminotransferase family. HemL subfamily. Pyridoxal 5'-phosphate is required as a cofactor.

The protein localises to the cytoplasm. The catalysed reaction is (S)-4-amino-5-oxopentanoate = 5-aminolevulinate. It participates in porphyrin-containing compound metabolism; protoporphyrin-IX biosynthesis; 5-aminolevulinate from L-glutamyl-tRNA(Glu): step 2/2. This Pyrobaculum neutrophilum (strain DSM 2338 / JCM 9278 / NBRC 100436 / V24Sta) (Thermoproteus neutrophilus) protein is Glutamate-1-semialdehyde 2,1-aminomutase.